The chain runs to 86 residues: Omega-theraphotoxin-Hhn1c (86 aa).

Positions 1–21 (MKSIVFVALFGLALLAVVCSA) are cleaved as a signal peptide. A propeptide spanning residues 22 to 50 (SEDAHKELLKEVVRAMVVDKTDAVQAEER) is cleaved from the precursor. Cystine bridges form between Cys-52/Cys-66, Cys-59/Cys-71, and Cys-65/Cys-78.

This sequence belongs to the neurotoxin 10 (Hwtx-1) family. 17 (Hntx-9) subfamily. Expressed by the venom gland.

The protein localises to the secreted. Ion channel inhibitor. This chain is Omega-theraphotoxin-Hhn1c, found in Cyriopagopus hainanus (Chinese bird spider).